An 85-amino-acid polypeptide reads, in one-letter code: Cell division topological specificity factor (85 aa).

It belongs to the MinE family.

Functionally, prevents the cell division inhibition by proteins MinC and MinD at internal division sites while permitting inhibition at polar sites. This ensures cell division at the proper site by restricting the formation of a division septum at the midpoint of the long axis of the cell. The chain is Cell division topological specificity factor from Xanthomonas euvesicatoria pv. vesicatoria (strain 85-10) (Xanthomonas campestris pv. vesicatoria).